The primary structure comprises 354 residues: Tyrosine recombinase XerH (354 aa).

Positions 48 to 134 (LTKGVKNIDE…AVINFFDFLD (87 aa)) constitute a Core-binding (CB) domain. Residues 163–346 (KLPEFMSKEE…DNDKLKLAAQ (184 aa)) form the Tyr recombinase domain. Residues Arg-205, Lys-231, His-298, Arg-301, and His-324 contribute to the active site. The active-site O-(3'-phospho-DNA)-tyrosine intermediate is the Tyr-333.

The protein belongs to the 'phage' integrase family. XerH subfamily.

The protein resides in the cytoplasm. Its activity is regulated as follows. FtsK is required for efficient recombination. Its function is as follows. Site-specific tyrosine recombinase, which acts by catalyzing the cutting and rejoining of the recombining DNA molecules. Binds to the complete atypical dif motif (difH) site and to both halves separately. This chain is Tyrosine recombinase XerH, found in Campylobacter jejuni subsp. jejuni serotype O:2 (strain ATCC 700819 / NCTC 11168).